Consider the following 400-residue polypeptide: Enoyl-[acyl-carrier-protein] reductase [NADH] (400 aa).

Residues 48 to 53 (GSSSGY), 74 to 75 (FE), 111 to 112 (DA), and 139 to 140 (LA) each bind NAD(+). Y225 lines the substrate pocket. Y235 functions as the Proton donor in the catalytic mechanism. NAD(+) is bound by residues K244 and 273 to 275 (VVT).

It belongs to the TER reductase family. In terms of assembly, monomer.

It carries out the reaction a 2,3-saturated acyl-[ACP] + NAD(+) = a (2E)-enoyl-[ACP] + NADH + H(+). The protein operates within lipid metabolism; fatty acid biosynthesis. Functionally, involved in the final reduction of the elongation cycle of fatty acid synthesis (FAS II). Catalyzes the reduction of a carbon-carbon double bond in an enoyl moiety that is covalently linked to an acyl carrier protein (ACP). The chain is Enoyl-[acyl-carrier-protein] reductase [NADH] from Aliivibrio fischeri (strain ATCC 700601 / ES114) (Vibrio fischeri).